Here is a 285-residue protein sequence, read N- to C-terminus: 4-diphosphocytidyl-2-C-methyl-D-erythritol kinase (285 aa).

The active site involves Lys-11. Residue 95-105 (PVAAGIGGGSA) participates in ATP binding. Residue Asp-137 is part of the active site.

This sequence belongs to the GHMP kinase family. IspE subfamily.

The enzyme catalyses 4-CDP-2-C-methyl-D-erythritol + ATP = 4-CDP-2-C-methyl-D-erythritol 2-phosphate + ADP + H(+). The protein operates within isoprenoid biosynthesis; isopentenyl diphosphate biosynthesis via DXP pathway; isopentenyl diphosphate from 1-deoxy-D-xylulose 5-phosphate: step 3/6. In terms of biological role, catalyzes the phosphorylation of the position 2 hydroxy group of 4-diphosphocytidyl-2C-methyl-D-erythritol. The chain is 4-diphosphocytidyl-2-C-methyl-D-erythritol kinase from Paramagnetospirillum magneticum (strain ATCC 700264 / AMB-1) (Magnetospirillum magneticum).